The following is a 353-amino-acid chain: Mitogen-activated protein kinase mpkB (353 aa).

Residues 21 to 309 (YEIQDVIGEG…VEEALRHPYL (289 aa)) enclose the Protein kinase domain. Residues 27 to 35 (IGEGAYGVV) and Lys50 contribute to the ATP site. Residue Asp145 is the Proton acceptor of the active site.

The protein belongs to the protein kinase superfamily. Ser/Thr protein kinase family. MAP kinase subfamily. Mg(2+) is required as a cofactor.

Its subcellular location is the nucleus. It catalyses the reaction L-seryl-[protein] + ATP = O-phospho-L-seryl-[protein] + ADP + H(+). It carries out the reaction L-threonyl-[protein] + ATP = O-phospho-L-threonyl-[protein] + ADP + H(+). Activated by threonine and tyrosine phosphorylation. In terms of biological role, mitogen-activated protein kinase (MAPK) that plays a role in conidiation and regulation of secondary metabolite biosynthesis. Acts as a repressor of dihydroxynaphthalene (DHN)-melanin production. In Aspergillus fumigatus (strain CBS 144.89 / FGSC A1163 / CEA10) (Neosartorya fumigata), this protein is Mitogen-activated protein kinase mpkB.